Consider the following 113-residue polypeptide: MTTIQFIQGIDEEVTPEVRLTRSRSGNQGTATLIFEDPKALGQDVTQEITGMYMIDEEGQITSRDVKARFVNGQPKFLEGLYVMKTKQEWERFMRFMESYAKEHDLGFKKAKA.

The protein belongs to the Psb28 family. Part of the photosystem II complex.

The protein resides in the cellular thylakoid membrane. This is Photosystem II reaction center Psb28 protein from Trichodesmium erythraeum (strain IMS101).